The sequence spans 262 residues: Type III pantothenate kinase (262 aa).

12 to 19 (DIGNTSIA) lines the ATP pocket. Residues Tyr94 and 109 to 112 (GSDV) each bind substrate. Asp111 serves as the catalytic Proton acceptor. Asp132 contributes to the K(+) binding site. Thr135 lines the ATP pocket. Thr187 is a binding site for substrate.

This sequence belongs to the type III pantothenate kinase family. In terms of assembly, homodimer. It depends on NH4(+) as a cofactor. K(+) serves as cofactor.

The protein resides in the cytoplasm. The enzyme catalyses (R)-pantothenate + ATP = (R)-4'-phosphopantothenate + ADP + H(+). It participates in cofactor biosynthesis; coenzyme A biosynthesis; CoA from (R)-pantothenate: step 1/5. Its function is as follows. Catalyzes the phosphorylation of pantothenate (Pan), the first step in CoA biosynthesis. This is Type III pantothenate kinase from Borreliella burgdorferi (strain ATCC 35210 / DSM 4680 / CIP 102532 / B31) (Borrelia burgdorferi).